We begin with the raw amino-acid sequence, 354 residues long: V-type proton ATPase subunit C (354 aa).

It belongs to the V-ATPase C subunit family. As to quaternary structure, V-ATPase is a heteromultimeric enzyme composed of a peripheral catalytic V1 complex (components A to H) attached to an integral membrane V0 proton pore complex (components: a, c, c', c'' and d).

The protein localises to the vacuole membrane. Its function is as follows. Subunit of the peripheral V1 complex of vacuolar ATPase. Subunit C is necessary for the assembly of the catalytic sector of the enzyme and is likely to have a specific function in its catalytic activity. V-ATPase is responsible for acidifying a variety of intracellular compartments in eukaryotic cells. This is V-type proton ATPase subunit C (VATC) from Hordeum vulgare (Barley).